Consider the following 2178-residue polypeptide: Streptococcal hemagglutinin (2178 aa).

The N-terminal stretch at 1-90 (MFFKRQKGQY…AVVTSSSVYA (90 aa)) is a signal peptide. Residues 91-137 (EEEQALEKVIDTRDVLATRGEAVLSEEAATTLSSEGANPVESLSDTL) form a non-repeat region 1 (NR1) region. Residues 138 to 219 (SASESASANS…SLISSDSSNS (82 aa)) are ser-rich region 1 (SR1). Low complexity predominate over residues 192–244 (TSQSFSSTTSSTQSSNNESLISSDSSNSLNTNQSVSARNQNARVRTRRAVAAN). 11 disordered regions span residues 192 to 246 (TSQS…ANDT), 495 to 557 (VSAS…SVSA), 584 to 653 (SAST…SVSA), 836 to 857 (SAST…SVSA), 884 to 917 (SAST…SVSA), 944 to 993 (SAST…SESA), 1020 to 1289 (SASV…SVSA), 1341 to 1390 (ASTS…ESAS), 1488 to 1685 (SASV…SVSA), 1725 to 1901 (ASTS…SAST), and 2119 to 2151 (LSQS…GESE). The tract at residues 220–449 (LNTNQSVSAR…ANRVVKDLQI (230 aa)) is non-repeat region 2 (NR2). The segment at 450–2143 (SKSNSASQSS…SMHDRISKGQ (1694 aa)) is ser-rich region 2 (SR2). Residues 2119-2130 (LSQSLSDSQSTS) are compositionally biased toward low complexity. The LPXTG sorting signal signature appears at 2144–2148 (LPRTG). Pentaglycyl murein peptidoglycan amidated threonine is present on threonine 2147. The propeptide at 2148 to 2178 (GESESKASILALGIGALGLAFKKRKKNESED) is removed by sortase.

The protein belongs to the serine-rich repeat protein (SRRP) family. Post-translationally, the protein is glycosylated in vivo; constructs without SR1 and SR2 are not glycosylated.

It is found in the secreted. Its subcellular location is the cell wall. Functionally, a cell wall protein involved with PadA in host cell interactions required for colonization and pathogensis. Mediates hemagglutination and adherence to ghst glycoproteins. Recognizes fetuin-A (AHSG), a highly glycosylated human plasma protein, also involved in recognition of human platelets, probably via platelet glycoprotein Ib alpha (GP1BA). Acts in concert with PadA to promote binding to glycosylated human fibronectin (FN1) and vitronectin (VTN), and biofilm formation. Plays a major role in fibronectin and vitronectin binding; binding is mediated by glycosylated regions. Probably mediates interaction of PadA with resting platelets. The chain is Streptococcal hemagglutinin from Streptococcus gordonii (strain Challis / ATCC 35105 / BCRC 15272 / CH1 / DL1 / V288).